The chain runs to 519 residues: Sorting nexin-2 (519 aa).

A disordered region spans residues 1–104 (MAAEREPPPL…EPSPAVTPVT (104 aa)). Low complexity-rich tracts occupy residues 27–50 (LFTS…LPAE) and 93–104 (SSEPSPAVTPVT). S97 bears the Phosphoserine mark. T101 and T104 each carry phosphothreonine. Residues S117 and S119 each carry the phosphoserine modification. The PX domain maps to 140-269 (FDIEIGVSDP…QFLESSELPR (130 aa)). A 1,2-diacyl-sn-glycero-3-phospho-(1D-myo-inositol-3-phosphate)-binding residues include R183, S185, K211, and R235. S185 is modified (phosphoserine). Residues 260–519 (QFLESSELPR…AFLPEAKAIA (260 aa)) are interaction with RhoG. Phosphoserine is present on S277. The interval 278-295 (GAGILRMVNKAADAVNKM) is membrane-binding amphipathic helix. A BAR domain is found at 299–519 (MNESDAWFEE…AFLPEAKAIA (221 aa)). K469 bears the N6-acetyllysine mark.

Belongs to the sorting nexin family. As to quaternary structure, predominantly forms heterodimers with BAR domain-containing sorting nexins SNX5, SNX6 and SNX32; can self-associate to form homodimers. The heterodimers are proposed to self-assemble into helical arrays on the membrane to stabilize and expand local membrane curvature underlying endosomal tubule formation. Thought to be a component of the originally described retromer complex (also called SNX-BAR retromer) which is a pentamer containing the heterotrimeric retromer cargo-selective complex (CSC), also described as vacuolar protein sorting subcomplex (VPS), and a heterodimeric membrane-deforming subcomplex formed between SNX1 or SNX2 and SNX5 or SNX6 (also called SNX-BAR subcomplex); the respective CSC and SNX-BAR subcomplexes associate with low affinity. Interacts with SNX5, SNX6, SNX32, VPS26A, VPS29, VPS35, FNBP1, KALRN, RHOG (GDP-bound form).

Its subcellular location is the early endosome membrane. The protein localises to the cell projection. It is found in the lamellipodium. Functionally, involved in several stages of intracellular trafficking. Interacts with membranes containing phosphatidylinositol 3-phosphate (PtdIns(3P)) or phosphatidylinositol 3,5-bisphosphate (PtdIns(3,5)P2). Acts in part as component of the retromer membrane-deforming SNX-BAR subcomplex. The SNX-BAR retromer mediates retrograde transport of cargo proteins from endosomes to the trans-Golgi network (TGN) and is involved in endosome-to-plasma membrane transport for cargo protein recycling. The SNX-BAR subcomplex functions to deform the donor membrane into a tubular profile called endosome-to-TGN transport carrier (ETC). Can sense membrane curvature and has in vitro vesicle-to-membrane remodeling activity. Required for retrograde endosome-to-TGN transport of TGN38. Promotes KALRN- and RHOG-dependent but retromer-independent membrane remodeling such as lamellipodium formation; the function is dependent on GEF activity of KALRN. This Homo sapiens (Human) protein is Sorting nexin-2 (SNX2).